Consider the following 349-residue polypeptide: Protein-glutamate methylesterase/protein-glutamine glutaminase (349 aa).

A Response regulatory domain is found at 5–122 (RVLSVDDSAL…REGMLAYSEM (118 aa)). Position 56 is a 4-aspartylphosphate (D56). A CheB-type methylesterase domain is found at 152–344 (LLSSEKLIAI…QQMLAKISAG (193 aa)). Active-site residues include S164, H190, and D286.

It belongs to the CheB family. In terms of processing, phosphorylated by CheA. Phosphorylation of the N-terminal regulatory domain activates the methylesterase activity.

It localises to the cytoplasm. The enzyme catalyses [protein]-L-glutamate 5-O-methyl ester + H2O = L-glutamyl-[protein] + methanol + H(+). It catalyses the reaction L-glutaminyl-[protein] + H2O = L-glutamyl-[protein] + NH4(+). Functionally, involved in chemotaxis. Part of a chemotaxis signal transduction system that modulates chemotaxis in response to various stimuli. Catalyzes the demethylation of specific methylglutamate residues introduced into the chemoreceptors (methyl-accepting chemotaxis proteins or MCP) by CheR. Also mediates the irreversible deamidation of specific glutamine residues to glutamic acid. In Escherichia coli O6:H1 (strain CFT073 / ATCC 700928 / UPEC), this protein is Protein-glutamate methylesterase/protein-glutamine glutaminase.